A 115-amino-acid polypeptide reads, in one-letter code: MAGTVLGVGAGVFVLALLWVSVLLLCALLFRASGAARFSVIFVFLGALIVTAILLLFPRASDAPAPEAETKIVDAFFIGRYVLLAFLTAVFLGSLFLVLIHHILEPIYAKPLRSY.

3 helical membrane passes run 10-30, 38-58, and 81-101; these read AGVFVLALLWVSVLLLCALLF, FSVIFVFLGALIVTAILLLFP, and YVLLAFLTAVFLGSLFLVLIH.

Belongs to the TMEM218 family. In terms of assembly, interacts with TMEM67.

Its subcellular location is the membrane. It localises to the cell projection. The protein resides in the cilium. Its function is as follows. May be involved in ciliary biogenesis or function. In Bos taurus (Bovine), this protein is Transmembrane protein 218 (TMEM218).